The chain runs to 668 residues: UvrABC system protein B (668 aa).

Residues 25-413 (NGINTGLQHQ…QNTVQQVIRP (389 aa)) form the Helicase ATP-binding domain. 38 to 45 (GVTGSGKT) contacts ATP. Residues 91–114 (YYDYYQPEAYIAASDTYIEKDSSV) carry the Beta-hairpin motif. In terms of domain architecture, Helicase C-terminal spans 429–595 (QVEDALSEIN…TIIKNIDDML (167 aa)). The UVR domain occupies 629–664 (TKVIKALEKRMRAYAKELEFEKATTIRDKITEVKQK).

It belongs to the UvrB family. In terms of assembly, forms a heterotetramer with UvrA during the search for lesions. Interacts with UvrC in an incision complex.

The protein resides in the cytoplasm. Functionally, the UvrABC repair system catalyzes the recognition and processing of DNA lesions. A damage recognition complex composed of 2 UvrA and 2 UvrB subunits scans DNA for abnormalities. Upon binding of the UvrA(2)B(2) complex to a putative damaged site, the DNA wraps around one UvrB monomer. DNA wrap is dependent on ATP binding by UvrB and probably causes local melting of the DNA helix, facilitating insertion of UvrB beta-hairpin between the DNA strands. Then UvrB probes one DNA strand for the presence of a lesion. If a lesion is found the UvrA subunits dissociate and the UvrB-DNA preincision complex is formed. This complex is subsequently bound by UvrC and the second UvrB is released. If no lesion is found, the DNA wraps around the other UvrB subunit that will check the other stand for damage. This is UvrABC system protein B from Francisella tularensis subsp. tularensis (strain SCHU S4 / Schu 4).